A 160-amino-acid polypeptide reads, in one-letter code: Epithelial membrane protein 1 (160 aa).

The chain crosses the membrane as a helical span at residues 1 to 21 (MLVLLAAIFVVHIATCVMLFV). N-linked (GlcNAc...) asparagine glycans are attached at residues Asn-35 and Asn-43. A run of 3 helical transmembrane segments spans residues 67–87 (FMILSIIFSVISLIIFVFQLF), 95–115 (FFLSGATMLVCWLCVLIGASI), and 137–157 (FILAWICFCFSFVVGVLYLVL).

Belongs to the PMP-22/EMP/MP20 family. In terms of tissue distribution, most abundant in squamous epithelia.

The protein localises to the membrane. In Oryctolagus cuniculus (Rabbit), this protein is Epithelial membrane protein 1 (EMP1).